The primary structure comprises 880 residues: Paramyosin (880 aa).

The tract at residues 1–34 (MSGSLYRSPSAALYKSPSMSAFGGLPAAFGSMSV) is nonhelical region. The stretch at 35 to 859 (ADLGSLTRLE…LIRAKHRHQL (825 aa)) forms a coiled coil. Residues 860–880 (LRAKMLQRQKFTFSKMSNRDN) form a nonhelical region region.

The protein belongs to the paramyosin family. As to quaternary structure, homodimer.

It localises to the cytoplasm. The protein localises to the myofibril. In terms of biological role, paramyosin is a major structural component of many thick filaments isolated from invertebrate muscles. The sequence is that of Paramyosin from Brugia malayi (Filarial nematode worm).